The following is a 503-amino-acid chain: D-alanine--D-alanyl carrier protein ligase (503 aa).

151–152 (TS) contacts ATP. Residue aspartate 196 participates in D-alanine binding. Residue 291–296 (NTYGPT) participates in ATP binding. Valine 300 contributes to the D-alanine binding site. ATP is bound by residues aspartate 382 and lysine 491. Lysine 491 is a binding site for D-alanine.

It belongs to the ATP-dependent AMP-binding enzyme family. DltA subfamily.

It localises to the cytoplasm. It carries out the reaction holo-[D-alanyl-carrier protein] + D-alanine + ATP = D-alanyl-[D-alanyl-carrier protein] + AMP + diphosphate. It participates in cell wall biogenesis; lipoteichoic acid biosynthesis. In terms of biological role, catalyzes the first step in the D-alanylation of lipoteichoic acid (LTA), the activation of D-alanine and its transfer onto the D-alanyl carrier protein (Dcp) DltC. In an ATP-dependent two-step reaction, forms a high energy D-alanyl-AMP intermediate, followed by transfer of the D-alanyl residue as a thiol ester to the phosphopantheinyl prosthetic group of the Dcp. D-alanylation of LTA plays an important role in modulating the properties of the cell wall in Gram-positive bacteria, influencing the net charge of the cell wall. In Bacillus velezensis (strain DSM 23117 / BGSC 10A6 / LMG 26770 / FZB42) (Bacillus amyloliquefaciens subsp. plantarum), this protein is D-alanine--D-alanyl carrier protein ligase.